A 337-amino-acid chain; its full sequence is Casein kinase II subunit alpha (337 aa).

Residues 47–332 (YEIIRKIGRG…TREAMEHPYF (286 aa)) form the Protein kinase domain. Residues 53–61 (IGRGKYSEV) and Lys76 each bind ATP. The active-site Proton acceptor is the Asp164.

The protein belongs to the protein kinase superfamily. CMGC Ser/Thr protein kinase family. CK2 subfamily. Tetramer of two alpha and two beta chains.

The catalysed reaction is L-seryl-[protein] + ATP = O-phospho-L-seryl-[protein] + ADP + H(+). It carries out the reaction L-threonyl-[protein] + ATP = O-phospho-L-threonyl-[protein] + ADP + H(+). Its function is as follows. Casein kinases are operationally defined by their preferential utilization of acidic proteins such as caseins as substrates. The alpha chain contains the catalytic site. The chain is Casein kinase II subunit alpha (casK) from Dictyostelium discoideum (Social amoeba).